The primary structure comprises 287 residues: Bifunctional protein FolD (287 aa).

Residues 165–167 (GRG), threonine 192, and valine 233 contribute to the NADP(+) site.

The protein belongs to the tetrahydrofolate dehydrogenase/cyclohydrolase family. Homodimer.

It carries out the reaction (6R)-5,10-methylene-5,6,7,8-tetrahydrofolate + NADP(+) = (6R)-5,10-methenyltetrahydrofolate + NADPH. It catalyses the reaction (6R)-5,10-methenyltetrahydrofolate + H2O = (6R)-10-formyltetrahydrofolate + H(+). Its pathway is one-carbon metabolism; tetrahydrofolate interconversion. In terms of biological role, catalyzes the oxidation of 5,10-methylenetetrahydrofolate to 5,10-methenyltetrahydrofolate and then the hydrolysis of 5,10-methenyltetrahydrofolate to 10-formyltetrahydrofolate. The protein is Bifunctional protein FolD of Cutibacterium acnes (strain DSM 16379 / KPA171202) (Propionibacterium acnes).